The primary structure comprises 363 residues: Fructose-bisphosphate aldolase 2 (363 aa).

Ser-61 lines the D-glyceraldehyde 3-phosphate pocket. The active-site Proton donor is Asp-109. Residues His-110, Asp-144, Glu-174, and His-226 each coordinate Zn(2+). Residue Gly-227 participates in dihydroxyacetone phosphate binding. Zn(2+) is bound at residue His-264. 265 to 267 (GGS) provides a ligand contact to dihydroxyacetone phosphate.

This sequence belongs to the class II fructose-bisphosphate aldolase family. As to quaternary structure, homodimer. It depends on Zn(2+) as a cofactor.

The catalysed reaction is beta-D-fructose 1,6-bisphosphate = D-glyceraldehyde 3-phosphate + dihydroxyacetone phosphate. The protein operates within carbohydrate degradation; glycolysis; D-glyceraldehyde 3-phosphate and glycerone phosphate from D-glucose: step 4/4. Functionally, catalyzes the aldol condensation of dihydroxyacetone phosphate (DHAP or glycerone-phosphate) with glyceraldehyde 3-phosphate (G3P) to form fructose 1,6-bisphosphate (FBP) in gluconeogenesis and the reverse reaction in glycolysis. This is Fructose-bisphosphate aldolase 2 (FBA2) from Paracoccidioides lutzii (strain ATCC MYA-826 / Pb01) (Paracoccidioides brasiliensis).